The chain runs to 429 residues: UPF0242 protein CT_616 (429 aa).

The protein belongs to the UPF0242 family.

In Chlamydia trachomatis serovar D (strain ATCC VR-885 / DSM 19411 / UW-3/Cx), this protein is UPF0242 protein CT_616.